Reading from the N-terminus, the 110-residue chain is Large ribosomal subunit protein uL22 (110 aa).

It belongs to the universal ribosomal protein uL22 family. Part of the 50S ribosomal subunit.

Its function is as follows. This protein binds specifically to 23S rRNA; its binding is stimulated by other ribosomal proteins, e.g. L4, L17, and L20. It is important during the early stages of 50S assembly. It makes multiple contacts with different domains of the 23S rRNA in the assembled 50S subunit and ribosome. In terms of biological role, the globular domain of the protein is located near the polypeptide exit tunnel on the outside of the subunit, while an extended beta-hairpin is found that lines the wall of the exit tunnel in the center of the 70S ribosome. This chain is Large ribosomal subunit protein uL22, found in Verminephrobacter eiseniae (strain EF01-2).